Here is a 627-residue protein sequence, read N- to C-terminus: Mitochondrial distribution and morphology protein 34 (627 aa).

In terms of domain architecture, SMP-LTD spans 1 to 195; it reads MAFNFNWSPL…LPAIIHRLSL (195 aa). 4 disordered regions span residues 209–230, 332–470, 486–557, and 586–627; these read SAQVTNPSLDGPGLDPLLNPPQ, ASLA…RTSP, LQRQ…SRPS, and RIQD…AYRH. 2 stretches are compositionally biased toward low complexity: residues 215 to 225 and 332 to 341; these read PSLDGPGLDPL and ASLASSSHSR. The span at 360 to 372 shows a compositional bias: basic residues; sequence RHSKAHARKRKKR. Positions 373–384 are enriched in basic and acidic residues; it reads VVDLRRRPKSAD. The segment covering 390-412 has biased composition (low complexity); sequence SGESAYTETSTTTSAVSVFSGST. The segment covering 436-451 has biased composition (basic and acidic residues); it reads TLRDRIAARDDAERNS. The span at 528 to 557 shows a compositional bias: low complexity; that stretch reads PNASNNYTSSSSPSARDPQQQQPQQLSRPS.

Belongs to the MDM34 family. As to quaternary structure, component of the ER-mitochondria encounter structure (ERMES) or MDM complex, composed of MMM1, MDM10, MDM12 and MDM34.

It localises to the mitochondrion outer membrane. Its function is as follows. Component of the ERMES/MDM complex, which serves as a molecular tether to connect the endoplasmic reticulum (ER) and mitochondria. Components of this complex are involved in the control of mitochondrial shape and protein biogenesis, and function in nonvesicular lipid trafficking between the ER and mitochondria. MDM34 is required for the interaction of the ER-resident membrane protein MMM1 and the outer mitochondrial membrane-resident beta-barrel protein MDM10. The protein is Mitochondrial distribution and morphology protein 34 of Blastomyces gilchristii (strain SLH14081) (Blastomyces dermatitidis).